Here is a 305-residue protein sequence, read N- to C-terminus: MSASVQSWTDRLDGAQAADVSALLGRATAADGTAPVSEQGVHAVSGAGGDGVRHLVETDADRIVGYAQLQPGHGEHPAMAELAVDPEARGRGIGGRLVAEVLSAGGPDTRVWAHGNLPAAQAVAQRLGLTGARELLQLRRPLAGAELPELVVLEGISLRVYRGVEDDPEVLRVNAAAFAWHPEQGSWTEREMAERRAEAWFDPAGLFMAFATSDEKRLLGFHWTKVHPKQGDEPAIGEVYVVAIGPDAQGRGLGRLLTLAGLHYLRDRGLGAVLLYVEGDNASALHTYDRLGFERFHTDVAYARA.

2 N-acetyltransferase domains span residues 10 to 154 (DRLD…VVLE) and 156 to 305 (ISLR…YARA). Glutamate 38 is a 1D-myo-inositol 2-(L-cysteinylamino)-2-deoxy-alpha-D-glucopyranoside binding site. Residue 82 to 84 (LAV) coordinates acetyl-CoA. 1D-myo-inositol 2-(L-cysteinylamino)-2-deoxy-alpha-D-glucopyranoside is bound by residues glutamate 183, lysine 225, and glutamate 238. Acetyl-CoA contacts are provided by residues 242–244 (VAI) and 249–255 (QGRGLGR). Tyrosine 276 contacts 1D-myo-inositol 2-(L-cysteinylamino)-2-deoxy-alpha-D-glucopyranoside. Residue 281–286 (NASALH) participates in acetyl-CoA binding.

This sequence belongs to the acetyltransferase family. MshD subfamily. In terms of assembly, monomer.

The enzyme catalyses 1D-myo-inositol 2-(L-cysteinylamino)-2-deoxy-alpha-D-glucopyranoside + acetyl-CoA = mycothiol + CoA + H(+). Its function is as follows. Catalyzes the transfer of acetyl from acetyl-CoA to desacetylmycothiol (Cys-GlcN-Ins) to form mycothiol. The protein is Mycothiol acetyltransferase of Rhodococcus opacus (strain B4).